A 524-amino-acid chain; its full sequence is Bifunctional NAD(P)H-hydrate repair enzyme Nnr (524 aa).

Positions 1 to 219 are NAD(P)H-hydrate epimerase; sequence MKVARVSEIK…ISYPRALLED (219 aa). Residues 9 to 218 enclose the YjeF N-terminal domain; that stretch reads IKLLDREAAE…HISYPRALLE (210 aa). The interval 57 to 61 is NADPHX 1; for epimerase activity; it reads NNGGD. N58 and D128 together coordinate K(+). Residues 132–138 are NADPHX 1; for epimerase activity; it reads GTGLSRP. Positions 143 and 161 each coordinate (6S)-NADPHX. A K(+)-binding site is contributed by S164. A YjeF C-terminal domain is found at 224–507; the sequence is VETNDPVPLP…NYLPKALRAL (284 aa). The tract at residues 224–524 is ADP-dependent (S)-NAD(P)H-hydrate dehydratase; it reads VETNDPVPLP…LERYTIKVLP (301 aa). Position 330 (G330) interacts with (6S)-NADPHX. Positions 381-387 are NADPHX 2; for dehydratase activity; that stretch reads HAGEMSR. ADP-binding positions include 418–422 and 438–447; these read KGAHT and NPGMATAGSG. D448 contributes to the (6S)-NADPHX binding site.

This sequence in the N-terminal section; belongs to the NnrE/AIBP family. It in the C-terminal section; belongs to the NnrD/CARKD family. It depends on K(+) as a cofactor.

It carries out the reaction (6S)-NADHX + ADP = AMP + phosphate + NADH + H(+). The catalysed reaction is (6S)-NADPHX + ADP = AMP + phosphate + NADPH + H(+). It catalyses the reaction (6R)-NADHX = (6S)-NADHX. The enzyme catalyses (6R)-NADPHX = (6S)-NADPHX. Bifunctional enzyme that catalyzes the epimerization of the S- and R-forms of NAD(P)HX and the dehydration of the S-form of NAD(P)HX at the expense of ADP, which is converted to AMP. This allows the repair of both epimers of NAD(P)HX, a damaged form of NAD(P)H that is a result of enzymatic or heat-dependent hydration. This chain is Bifunctional NAD(P)H-hydrate repair enzyme Nnr (nnr), found in Thermofilum pendens (strain DSM 2475 / Hrk 5).